A 499-amino-acid polypeptide reads, in one-letter code: Protein adenylyltransferase Fic (499 aa).

A helical membrane pass occupies residues phenylalanine 38–leucine 58. TPR repeat units lie at residues alanine 126–histidine 159 and proline 160–histidine 194. The Inhibitory (S/T)XXXE(G/N) motif signature appears at serine 251 to glycine 256. Residues glutamate 255 and valine 337 to histidine 340 each bind ATP. In terms of domain architecture, Fido spans isoleucine 306–aspartate 441. Histidine 384 is a catalytic residue. ATP contacts are provided by residues aspartate 388–arginine 395, tyrosine 420–tyrosine 421, and asparagine 428.

This sequence belongs to the fic family. In terms of assembly, homodimer.

Its subcellular location is the membrane. It catalyses the reaction L-tyrosyl-[protein] + ATP = O-(5'-adenylyl)-L-tyrosyl-[protein] + diphosphate. The enzyme catalyses L-threonyl-[protein] + ATP = 3-O-(5'-adenylyl)-L-threonyl-[protein] + diphosphate. The catalysed reaction is 3-O-(5'-adenylyl)-L-threonyl-[protein] + H2O = L-threonyl-[protein] + AMP + H(+). The side chain of Glu-255 determines which of the two opposing activities (AMPylase or de-AMPylase) will take place. In response to endoplasmic reticulum stress, mediates de-AMPylase activity. Adenylyltransferase activity is inhibited by the inhibitory helix present at the N-terminus: Glu-255 binds ATP and competes with ATP-binding at Arg-395, thereby preventing adenylyltransferase activity. In unstressed cells, disengagement of Glu-255 promotes adenylyltransferase activity. Activation dissociates ATP-binding from Glu-255, allowing ordered binding of the entire ATP moiety with the alpha-phosphate in an orientation that is productive for accepting an incoming target hydroxyl side chain. In terms of biological role, protein that can both mediate the addition of adenosine 5'-monophosphate (AMP) to specific residues of target proteins (AMPylation), and the removal of the same modification from target proteins (de-AMPylation), depending on the context. The side chain of Glu-255 determines which of the two opposing activities (AMPylase or de-AMPylase) will take place. Acts as a key regulator of the unfolded protein response (UPR) by mediating AMPylation or de-AMPylation of Hsc70-3/BiP. In unstressed cells, acts as an adenylyltransferase by mediating AMPylation of Hsc70-3/BiP at 'Thr-518', thereby inactivating it. In response to endoplasmic reticulum stress, acts as a phosphodiesterase by mediating removal of ATP (de-AMPylation) from Hsc70-3/BiP at 'Thr-518', leading to restore HSPA5/BiP activity. The sequence is that of Protein adenylyltransferase Fic from Aedes aegypti (Yellowfever mosquito).